Consider the following 341-residue polypeptide: KRR1 small subunit processome component homolog (341 aa).

Positions 126–194 constitute a KH domain; that stretch reads DIIKIGNLVH…VRDIVLETMN (69 aa). A compositionally biased stretch (basic residues) spans 230-244; the sequence is KNKNISKRKQPKSRK. Residues 230-327 form a disordered region; the sequence is KNKNISKRKQ…RPSEASKVDV (98 aa). Residues 271 to 341 adopt a coiled-coil conformation; it reads FLNKEQKQAK…AKLLKANKQK (71 aa). Basic and acidic residues-rich tracts occupy residues 272 to 303 and 313 to 327; these read LNKEQKQAKRQQERVAKQAEAAKKQDERRNKD and EQNRKRPSEASKVDV.

The protein belongs to the KRR1 family. As to quaternary structure, monomer. Component of the ribosomal small subunit (SSU) processome.

The protein resides in the nucleus. The protein localises to the nucleolus. Functionally, required for 40S ribosome biogenesis. Involved in nucleolar processing of pre-18S ribosomal RNA and ribosome assembly. Binds to RNA. Required for female germline development, cell viability during eye development and for survival of dividing cells and epithelial cells during early wing disk development. In Drosophila grimshawi (Hawaiian fruit fly), this protein is KRR1 small subunit processome component homolog.